We begin with the raw amino-acid sequence, 104 residues long: N(4)-acetylcytidine amidohydrolase (104 aa).

The ASCH domain maps to 7–95; that stretch reads MTFFERFETD…IQDIYPGISQ (89 aa). The active-site Proton acceptor is Lys22. Thr25 functions as the Nucleophile in the catalytic mechanism. The active-site Proton donor is the Glu75.

The protein belongs to the N(4)-acetylcytidine amidohydrolase family.

The enzyme catalyses N(4)-acetylcytidine + H2O = cytidine + acetate + H(+). It carries out the reaction N(4)-acetyl-2'-deoxycytidine + H2O = 2'-deoxycytidine + acetate + H(+). The catalysed reaction is N(4)-acetylcytosine + H2O = cytosine + acetate + H(+). Its function is as follows. Catalyzes the hydrolysis of N(4)-acetylcytidine (ac4C). This chain is N(4)-acetylcytidine amidohydrolase, found in Vibrio atlanticus (strain LGP32) (Vibrio splendidus (strain Mel32)).